The chain runs to 209 residues: DNA transformation protein TfoX1 (209 aa).

This sequence belongs to the Sxy/TfoX family.

Required for DNA transformation jointly with TfoY (tfoX2). In Aliivibrio fischeri (strain ATCC 700601 / ES114) (Vibrio fischeri), this protein is DNA transformation protein TfoX1.